A 333-amino-acid chain; its full sequence is Replication factor C subunit 2 (333 aa).

Alanine 2 is modified (N-acetylalanine). 55 to 62 serves as a coordination point for ATP; that stretch reads GPPGTGKT.

The protein belongs to the activator 1 small subunits family. Heterotetramer of subunits RFC2, RFC3, RFC4 and RFC5 that can form a complex with RFC1.

It is found in the nucleus. Its function is as follows. May be involved in DNA replication and thus regulate cell proliferation. The protein is Replication factor C subunit 2 (RFC2) of Arabidopsis thaliana (Mouse-ear cress).